The chain runs to 504 residues: Deoxyguanosinetriphosphate triphosphohydrolase (504 aa).

The HD domain maps to 66–273 (RLTHSLEVQQ…MEAADDISYC (208 aa)).

Belongs to the dGTPase family. Type 1 subfamily. As to quaternary structure, homotetramer. Requires Mg(2+) as cofactor.

It catalyses the reaction dGTP + H2O = 2'-deoxyguanosine + triphosphate + H(+). DGTPase preferentially hydrolyzes dGTP over the other canonical NTPs. The polypeptide is Deoxyguanosinetriphosphate triphosphohydrolase (Klebsiella pneumoniae (strain 342)).